Consider the following 877-residue polypeptide: Leucine--tRNA ligase (877 aa).

A 'HIGH' region motif is present at residues 43-53 (PYPSGRIHMGH). Residues 628–632 (KMSKS) carry the 'KMSKS' region motif. Residue K631 participates in ATP binding.

It belongs to the class-I aminoacyl-tRNA synthetase family.

Its subcellular location is the cytoplasm. It catalyses the reaction tRNA(Leu) + L-leucine + ATP = L-leucyl-tRNA(Leu) + AMP + diphosphate. This is Leucine--tRNA ligase from Brucella abortus biovar 1 (strain 9-941).